The chain runs to 564 residues: Putative ABC transporter ATP-binding protein PBPRA2240 (564 aa).

2 consecutive ABC transporter domains span residues 3-244 (IEFS…GIRE) and 299-533 (LTVN…ANLT). ATP contacts are provided by residues 37–44 (GPSGSGKS) and 332–339 (GKNGSGKS).

It belongs to the ABC transporter superfamily.

The protein resides in the cell inner membrane. Its function is as follows. Probably part of an ABC transporter complex. Responsible for energy coupling to the transport system. The protein is Putative ABC transporter ATP-binding protein PBPRA2240 of Photobacterium profundum (strain SS9).